We begin with the raw amino-acid sequence, 333 residues long: uncharacterized protein (333 aa).

This sequence belongs to the polysaccharide synthase family.

This is an uncharacterized protein from Methanocaldococcus jannaschii (strain ATCC 43067 / DSM 2661 / JAL-1 / JCM 10045 / NBRC 100440) (Methanococcus jannaschii).